The following is a 103-amino-acid chain: Small ribosomal subunit protein bS20 (103 aa).

The span at 1–20 (MATAKPKKKNPRLASGRKRV) shows a compositional bias: basic residues. The segment at 1 to 31 (MATAKPKKKNPRLASGRKRVRQDTKLNAANT) is disordered.

This sequence belongs to the bacterial ribosomal protein bS20 family.

Its function is as follows. Binds directly to 16S ribosomal RNA. The chain is Small ribosomal subunit protein bS20 from Polaromonas sp. (strain JS666 / ATCC BAA-500).